Here is a 170-residue protein sequence, read N- to C-terminus: Adenine phosphoribosyltransferase (170 aa).

The protein belongs to the purine/pyrimidine phosphoribosyltransferase family. Homodimer.

It localises to the cytoplasm. It carries out the reaction AMP + diphosphate = 5-phospho-alpha-D-ribose 1-diphosphate + adenine. The protein operates within purine metabolism; AMP biosynthesis via salvage pathway; AMP from adenine: step 1/1. Its function is as follows. Catalyzes a salvage reaction resulting in the formation of AMP, that is energically less costly than de novo synthesis. The polypeptide is Adenine phosphoribosyltransferase (Thermotoga sp. (strain RQ2)).